Reading from the N-terminus, the 246-residue chain is Putative outer membrane protein YiaT (246 aa).

An N-terminal signal peptide occupies residues 1-21 (MLINRNIVALFALPFMASATA).

It belongs to the MipA/OmpV family.

The protein localises to the cell outer membrane. This chain is Putative outer membrane protein YiaT (yiaT), found in Escherichia coli (strain K12).